We begin with the raw amino-acid sequence, 247 residues long: Carboxy-S-adenosyl-L-methionine synthase (247 aa).

Residues Y40, 65-67 (GAS), 90-91 (DN), 122-123 (DI), N137, and R204 each bind S-adenosyl-L-methionine.

The protein belongs to the class I-like SAM-binding methyltransferase superfamily. Cx-SAM synthase family. In terms of assembly, homodimer.

The catalysed reaction is prephenate + S-adenosyl-L-methionine = carboxy-S-adenosyl-L-methionine + 3-phenylpyruvate + H2O. In terms of biological role, catalyzes the conversion of S-adenosyl-L-methionine (SAM) to carboxy-S-adenosyl-L-methionine (Cx-SAM). The protein is Carboxy-S-adenosyl-L-methionine synthase of Pseudomonas putida (strain GB-1).